We begin with the raw amino-acid sequence, 247 residues long: Neurotrophic factor BDNF precursor form (247 aa).

The signal sequence occupies residues 1–18 (MTILFLTMVISYFGCMKA). Residues 19–128 (APMKEANVRG…AANMSVRVRR (110 aa)) constitute a propeptide that is removed on maturation. The N-linked (GlcNAc...) asparagine glycan is linked to asparagine 121. Disulfide bonds link cysteine 141–cysteine 208, cysteine 186–cysteine 237, and cysteine 196–cysteine 239.

This sequence belongs to the NGF-beta family. Monomers and homodimers. Binds to NTRK2/TRKB. Can form heterodimers with other neurotrophin family members, such as NTF3 and NTF4 (in vitro), but the physiological relevance of this is not clear. BDNF precursor form: interacts with the heterodimer formed by NGFR and SORCS2. Mature BDNF has much lower affinity for the heterodimer formed by NGFR and SORCS2. In terms of processing, N-glycosylated and glycosulfated, contrary to mature BDNF. Mature BDNF is produced by proteolytic removal of the propeptide, catalyzed by a FURIN family member. In addition, the precursor form is proteolytically cleaved within the propeptide, but this is not an obligatory intermediate for the production of mature BDNF. Can be converted into mature BDNF by plasmin (PLG).

Its subcellular location is the secreted. Important signaling molecule that activates signaling cascades downstream of NTRK2. During development, promotes the survival and differentiation of selected neuronal populations of the peripheral and central nervous systems. Participates in axonal growth, pathfinding and in the modulation of dendritic growth and morphology. Major regulator of synaptic transmission and plasticity at adult synapses in many regions of the CNS. The versatility of BDNF is emphasized by its contribution to a range of adaptive neuronal responses including long-term potentiation (LTP), long-term depression (LTD), certain forms of short-term synaptic plasticity, as well as homeostatic regulation of intrinsic neuronal excitability. In terms of biological role, important signaling molecule that activates signaling cascades downstream of NTRK2. Activates signaling cascades via the heterodimeric receptor formed by NGFR and SORCS2. Signaling via NGFR and SORCS2 plays a role in synaptic plasticity and long-term depression (LTD). Binding to NGFR and SORCS2 promotes neuronal apoptosis. Promotes neuronal growth cone collapse. This Felis catus (Cat) protein is Neurotrophic factor BDNF precursor form (BDNF).